The sequence spans 334 residues: Transaldolase (334 aa).

At Ser2 the chain carries N-acetylserine. Residue Lys143 is the Schiff-base intermediate with substrate of the active site.

This sequence belongs to the transaldolase family. Type 1 subfamily. As to quaternary structure, homodimer.

It catalyses the reaction D-sedoheptulose 7-phosphate + D-glyceraldehyde 3-phosphate = D-erythrose 4-phosphate + beta-D-fructose 6-phosphate. It participates in carbohydrate degradation; pentose phosphate pathway; D-glyceraldehyde 3-phosphate and beta-D-fructose 6-phosphate from D-ribose 5-phosphate and D-xylulose 5-phosphate (non-oxidative stage): step 2/3. Functionally, transaldolase is important for the balance of metabolites in the pentose-phosphate pathway. This is Transaldolase (TAL1) from Kluyveromyces lactis (strain ATCC 8585 / CBS 2359 / DSM 70799 / NBRC 1267 / NRRL Y-1140 / WM37) (Yeast).